A 131-amino-acid chain; its full sequence is ATP synthase epsilon chain (131 aa).

This sequence belongs to the ATPase epsilon chain family. F-type ATPases have 2 components, CF(1) - the catalytic core - and CF(0) - the membrane proton channel. CF(1) has five subunits: alpha(3), beta(3), gamma(1), delta(1), epsilon(1). CF(0) has three main subunits: a, b and c.

It localises to the cell membrane. Its function is as follows. Produces ATP from ADP in the presence of a proton gradient across the membrane. The chain is ATP synthase epsilon chain from Clostridium novyi (strain NT).